A 277-amino-acid chain; its full sequence is Probable septum site-determining protein MinC (277 aa).

Residues 107–168 (TEGLLPGRKG…ESGPQVSHYD (62 aa)) form a disordered region. The segment covering 122 to 142 (GKPDGKAAEGRAPDHGTEGRA) has biased composition (basic and acidic residues).

Belongs to the MinC family. As to quaternary structure, interacts with MinD and FtsZ.

Its function is as follows. Cell division inhibitor that blocks the formation of polar Z ring septums. Rapidly oscillates between the poles of the cell to destabilize FtsZ filaments that have formed before they mature into polar Z rings. Prevents FtsZ polymerization. The sequence is that of Probable septum site-determining protein MinC from Mesorhizobium japonicum (strain LMG 29417 / CECT 9101 / MAFF 303099) (Mesorhizobium loti (strain MAFF 303099)).